The chain runs to 78 residues: Sperm-specific protein Phi-0 (78 aa).

Basic residues-rich tracts occupy residues 1 to 21, 31 to 57, and 64 to 78; these read MVAR…RSAA, AASR…KPKA, and VRRR…SVSK. The interval 1–78 is disordered; the sequence is MVARRQTKKA…RRIRRASVSK (78 aa).

It localises to the nucleus. Its subcellular location is the chromosome. In terms of biological role, involved in nuclear basic protein transition: histones are replaced by spermatid specific proteins which are themselves replaced by protamines in late spermatids. This chain is Sperm-specific protein Phi-0, found in Holothuria tubulosa (Tubular sea cucumber).